A 337-amino-acid chain; its full sequence is Glyceraldehyde-3-phosphate dehydrogenase, cytosolic (337 aa).

The tract at residues 1-151 (MAKVKVGING…YKSDLNIVSN (151 aa)) is binding to NAD. NAD(+)-binding positions include 13 to 14 (RI), aspartate 35, and arginine 82. The catalytic stretch occupies residues 152–337 (ASCTTNCLAP…DLIMHISKCQ (186 aa)). D-glyceraldehyde 3-phosphate contacts are provided by residues 153 to 155 (SCT), threonine 184, 213 to 214 (TG), and arginine 236. Residue cysteine 154 is the Nucleophile of the active site. Residue asparagine 318 coordinates NAD(+).

Belongs to the glyceraldehyde-3-phosphate dehydrogenase family. In terms of assembly, homotetramer.

It is found in the cytoplasm. It carries out the reaction D-glyceraldehyde 3-phosphate + phosphate + NAD(+) = (2R)-3-phospho-glyceroyl phosphate + NADH + H(+). It participates in carbohydrate degradation; glycolysis; pyruvate from D-glyceraldehyde 3-phosphate: step 1/5. In terms of biological role, key enzyme in glycolysis that catalyzes the first step of the pathway by converting D-glyceraldehyde 3-phosphate (G3P) into 3-phospho-D-glyceroyl phosphate. Essential for the maintenance of cellular ATP levels and carbohydrate metabolism. The sequence is that of Glyceraldehyde-3-phosphate dehydrogenase, cytosolic (GAPC) from Mesembryanthemum crystallinum (Common ice plant).